A 456-amino-acid chain; its full sequence is Chordin-like protein 1 (456 aa).

The N-terminal stretch at 1–28 (MRRKWRSEDFHFVFFGVLCLLLIDRGKL) is a signal peptide. VWFC domains are found at residues 36 to 101 (TYCV…PRCP), 115 to 181 (KSCE…PVCR), and 262 to 327 (RVCV…KVCP). A glycan (N-linked (GlcNAc...) asparagine) is linked at Asn120. The short motif at 181-183 (RGD) is the Cell attachment site element. A glycan (N-linked (GlcNAc...) asparagine) is linked at Asn295.

As to expression, mainly expressed in the ventral retina.

It is found in the secreted. In terms of biological role, seems to antagonize the function of BMP4 by binding to it and preventing its interaction with receptors. The sequence is that of Chordin-like protein 1 (CHRDL1) from Gallus gallus (Chicken).